Consider the following 231-residue polypeptide: MKQETGKKRIIIAIDGPAASGKSTTARKVAHLLGYTYIDTGAMYRSVTLKALKQGVLDSLHHSPESVSGLLHDIVIHFEGDHVFLDGEDVTAEIRSNQVSREVSFISSLKPVRDRLREMQQHLGRQRGVVMDGRDIGTVVFPDAELKIYLVADARERAKRRHAELTAKSAEGVELPDLDSLEQEITKRDRDDAEREHAPLKKHPEAYEIDTSAMTIERQVEMVCQLARARE.

16–24 (GPAASGKST) lines the ATP pocket. The tract at residues 176–205 (PDLDSLEQEITKRDRDDAEREHAPLKKHPE) is disordered. Over residues 184 to 205 (EITKRDRDDAEREHAPLKKHPE) the composition is skewed to basic and acidic residues.

Belongs to the cytidylate kinase family. Type 1 subfamily.

It localises to the cytoplasm. The catalysed reaction is CMP + ATP = CDP + ADP. It carries out the reaction dCMP + ATP = dCDP + ADP. This Pelodictyon phaeoclathratiforme (strain DSM 5477 / BU-1) protein is Cytidylate kinase.